We begin with the raw amino-acid sequence, 98 residues long: Protein PROLINE CONTENT ALTERNATIVE 22 (98 aa).

In terms of tissue distribution, mainly expressed in flowers, to a lower extent, in roots and, at very low levels, in leaves and stems.

Its subcellular location is the cytoplasm. Functionally, acts as an opponent to RZF1 during early seedling growth in term of proline accumulation in response to dehydration and abscisic acid (ABA). Confers sensitivity to abiotic stresses such as ABA, drought and osmotic stress (e.g. mannitol treatment) by preventing proline accumulation and by reducing the expression of dehydration-inducible genes. Promotes the production of lipid peroxidation by drought stress thus leading to malondialdehyde (MDA) synthesis. Prevents pollen tube elongation. Necessary for RZF1 expression in seedlings. This is Protein PROLINE CONTENT ALTERNATIVE 22 from Arabidopsis thaliana (Mouse-ear cress).